The chain runs to 201 residues: MYB-like transcription factor EOBI (201 aa).

2 HTH myb-type domains span residues Asp-10 to Leu-62 and Arg-63 to Ile-117. DNA-binding regions (H-T-H motif) lie at residues Trp-38–Leu-62 and Trp-90–Ile-113. Residues Asp-121–Ile-170 form a disordered region. Residues Gln-135–Tyr-159 show a composition bias toward polar residues. The segment covering Thr-160–Asn-169 has biased composition (low complexity).

Expressed exclusively in flower organs. Accumulates mostly in flower limbs, to a lower extent in pistils and flower tubes, and, at low levels, in stamens.

The protein localises to the nucleus. Its function is as follows. MYB-type transcription factor controlling the production of volatile organic compounds (VOCs), including floral volatile benzenoids and phenylpropanoids (FVBP), in flowers of fragrant cultivars (e.g. cv. Mitchell and cv. V26) by regulating the expression of ODO1, a key regulator of the shikimate pathway, and of several biosynthetic floral scent-related genes (e.g. IGS, EGS, BSMT1, BSMT2, PAL1, PAL2, EPSPS, DAHPS, CS, CM1, ADT1 and PPA-AT). Binds to and activates the promoters of at least ODO1, IGS1 and PAL1. The polypeptide is MYB-like transcription factor EOBI (Petunia hybrida (Petunia)).